Here is a 62-residue protein sequence, read N- to C-terminus: Alpha-conotoxin-like Ca1.1 (62 aa).

An N-terminal signal peptide occupies residues 1-21 (MGMRMMFTVFLLVVLATTVVS). Positions 22–46 (FTSDRASDGRNAAANAFDLIALIAR) are excised as a propeptide. Position 47 is a pyrrolidone carboxylic acid (glutamine 47). Intrachain disulfides connect cysteine 49–cysteine 55 and cysteine 50–cysteine 61.

It belongs to the conotoxin A superfamily. As to expression, expressed by the venom duct.

It is found in the secreted. In terms of biological role, alpha-conotoxins act on postsynaptic membranes, they bind to the nicotinic acetylcholine receptors (nAChR) and thus inhibit them. This chain is Alpha-conotoxin-like Ca1.1, found in Conus caracteristicus (Characteristic cone).